We begin with the raw amino-acid sequence, 668 residues long: DNA mismatch repair protein MutL (668 aa).

The protein belongs to the DNA mismatch repair MutL/HexB family.

In terms of biological role, this protein is involved in the repair of mismatches in DNA. It is required for dam-dependent methyl-directed DNA mismatch repair. May act as a 'molecular matchmaker', a protein that promotes the formation of a stable complex between two or more DNA-binding proteins in an ATP-dependent manner without itself being part of a final effector complex. In Limosilactobacillus reuteri (strain DSM 20016) (Lactobacillus reuteri), this protein is DNA mismatch repair protein MutL.